Consider the following 1639-residue polypeptide: RIMS-binding protein 3B (1639 aa).

Disordered stretches follow at residues 1 to 22 (MAKD…SSPA), 215 to 240 (GSPD…CHAP), and 295 to 364 (SLDS…LTPS). Positions 21–143 (PAAAVLENQR…ELQRQLAEEL (123 aa)) form a coiled coil. Positions 326–339 (SPPPSPLPPPPPPS) are enriched in pro residues. Coiled coils occupy residues 409–442 (QADE…QETN) and 480–619 (LAKD…AEEN). A disordered region spans residues 697–811 (CRPGHPPEQP…DRDTASEVDD (115 aa)). Polar residues-rich tracts occupy residues 707-718 (WETSQMPESQVK) and 761-775 (SVPQ…SQPL). A compositionally biased stretch (low complexity) spans 776 to 790 (SKKTSSQSNSSSEGS). Residues 832 to 899 (PKLKIFMAQY…PSNFVEQIPD (68 aa)) enclose the SH3 1 domain. Fibronectin type-III domains are found at residues 995-1083 (APMQ…TLLA) and 1088-1184 (PPLE…IPED). 3 disordered regions span residues 1251-1273 (PRRQ…GAGS), 1292-1325 (QKSP…SPAP), and 1392-1413 (GTER…QALG). Positions 1293–1305 (KSPQNHRPPSVSD) are enriched in polar residues. The span at 1392 to 1406 (GTERREERREPEPHS) shows a compositional bias: basic and acidic residues. SH3 domains are found at residues 1452–1520 (TPAR…EMEV) and 1569–1636 (WTPK…HMSL).

This sequence belongs to the RIMBP family. In terms of assembly, interacts with LRGUK (via guanylate kinase-like domain). Interacts (via C-terminus) with HOOK1 (via coiled-coil region).

The protein localises to the cytoplasm. The protein resides in the cytoskeleton. Functionally, probable component of the manchette, a microtubule-based structure which plays a key role in sperm head morphogenesis during late stages of sperm development. The sequence is that of RIMS-binding protein 3B (RIMBP3B) from Homo sapiens (Human).